The chain runs to 511 residues: Intermediate cleaving peptidase 55 (511 aa).

5 residues coordinate Mn(2+): aspartate 327, aspartate 338, histidine 417, glutamate 444, and glutamate 467.

The protein belongs to the peptidase M24B family. Mn(2+) is required as a cofactor.

The protein localises to the nucleus. It localises to the mitochondrion inner membrane. The catalysed reaction is The enzyme cleaves the 36-Pro-Pro-37 bond of cysteine desulfurase (EC 2.8.1.7) removing three amino acid residues (Tyr-Ser-Pro) from the N-terminus after cleavage by mitochondrial processing peptidase.. Functionally, aminopeptidase which cleaves preprotein intermediates that carry destabilizing N-ter amino acid residues after the mitochondrial processing peptidase (MPP) cleavage site and is thus critical for stabilization of the mitochondrial proteome. The sequence is that of Intermediate cleaving peptidase 55 (ICP55) from Saccharomyces cerevisiae (strain ATCC 204508 / S288c) (Baker's yeast).